Here is a 1042-residue protein sequence, read N- to C-terminus: Isoleucine--tRNA ligase (1042 aa).

The short motif at 48 to 58 (PFATGLPHFGH) is the 'HIGH' region element. The 'KMSKS' region motif lies at 594 to 598 (KMSKS). ATP is bound at residue Lys597.

This sequence belongs to the class-I aminoacyl-tRNA synthetase family. IleS type 2 subfamily. As to quaternary structure, monomer. The cofactor is Zn(2+).

Its subcellular location is the cytoplasm. It catalyses the reaction tRNA(Ile) + L-isoleucine + ATP = L-isoleucyl-tRNA(Ile) + AMP + diphosphate. Functionally, catalyzes the attachment of isoleucine to tRNA(Ile). As IleRS can inadvertently accommodate and process structurally similar amino acids such as valine, to avoid such errors it has two additional distinct tRNA(Ile)-dependent editing activities. One activity is designated as 'pretransfer' editing and involves the hydrolysis of activated Val-AMP. The other activity is designated 'posttransfer' editing and involves deacylation of mischarged Val-tRNA(Ile). The polypeptide is Isoleucine--tRNA ligase (Borreliella afzelii (strain PKo) (Borrelia afzelii)).